The chain runs to 270 residues: Small ribosomal subunit protein eS1 (270 aa).

The tract at residues 235-270 (GTSKGGAASTAAVAKGEEGVKVDRPEGYEPPVLETV) is disordered. Over residues 239 to 248 (GGAASTAAVA) the composition is skewed to low complexity. The span at 249–261 (KGEEGVKVDRPEG) shows a compositional bias: basic and acidic residues.

It belongs to the eukaryotic ribosomal protein eS1 family. As to quaternary structure, component of the small ribosomal subunit. Mature ribosomes consist of a small (40S) and a large (60S) subunit. The 40S subunit contains about 33 different proteins and 1 molecule of RNA (18S). The 60S subunit contains about 49 different proteins and 3 molecules of RNA (28S, 5.8S and 5S).

The protein localises to the cytoplasm. This is Small ribosomal subunit protein eS1 from Ixodes scapularis (Black-legged tick).